Reading from the N-terminus, the 374-residue chain is Probable Histone-lysine N-methyltransferase ATXR5 (374 aa).

Residues 1 to 46 (MAPASITTTTTVARRIVGSRRRTKATSPPDSPPPKKLKPISEILAK) constitute a chloroplast transit peptide. The segment at 16–38 (IVGSRRRTKATSPPDSPPPKKLK) is disordered. The PHD-type zinc-finger motif lies at 59–109 (DVSCMQCGSGERAEELLLCDKCDKGFHMKCVRPIVVRVPIGSWLCPKCSGQ). Residue Met216 coordinates substrate. The SET domain occupies 240 to 362 (PPLLVVFDSR…KGERLYYDYN (123 aa)). Residues 250-252 (EGF) and 312-316 (RFISG) each bind S-adenosyl-L-methionine. Residues Arg334 and 364–365 (YE) contribute to the substrate site. S-adenosyl-L-methionine contacts are provided by Tyr368 and Val374.

It belongs to the class V-like SAM-binding methyltransferase superfamily. In terms of assembly, homodimer.

Its subcellular location is the plastid. The protein localises to the chloroplast. The protein resides in the nucleus. It carries out the reaction L-lysyl(27)-[histone H3] + S-adenosyl-L-methionine = N(6)-methyl-L-lysyl(27)-[histone H3] + S-adenosyl-L-homocysteine + H(+). In terms of biological role, histone methyltransferase that specifically monomethylates 'Lys-27' of histone H3 (H3K27me1). Has much higher activity on nucleosomes containing H3.1 than H3.3. Involved in the formation of constitutive heterochromatin and the silencing of heterochromatic elements. In Ricinus communis (Castor bean), this protein is Probable Histone-lysine N-methyltransferase ATXR5 (ATXR5).